Here is a 452-residue protein sequence, read N- to C-terminus: Probable glycine dehydrogenase (decarboxylating) subunit 1 (452 aa).

This sequence belongs to the GcvP family. N-terminal subunit subfamily. As to quaternary structure, the glycine cleavage system is composed of four proteins: P, T, L and H. In this organism, the P 'protein' is a heterodimer of two subunits.

The catalysed reaction is N(6)-[(R)-lipoyl]-L-lysyl-[glycine-cleavage complex H protein] + glycine + H(+) = N(6)-[(R)-S(8)-aminomethyldihydrolipoyl]-L-lysyl-[glycine-cleavage complex H protein] + CO2. Functionally, the glycine cleavage system catalyzes the degradation of glycine. The P protein binds the alpha-amino group of glycine through its pyridoxal phosphate cofactor; CO(2) is released and the remaining methylamine moiety is then transferred to the lipoamide cofactor of the H protein. This Alcanivorax borkumensis (strain ATCC 700651 / DSM 11573 / NCIMB 13689 / SK2) protein is Probable glycine dehydrogenase (decarboxylating) subunit 1.